The chain runs to 357 residues: Scopoletin 8-hydroxylase (357 aa).

The Fe2OG dioxygenase domain maps to 206 to 307 (MGTKMVNMNY…RVSVPIFTAP (102 aa)). A 2-oxoglutarate-binding site is contributed by tyrosine 216. Fe cation contacts are provided by histidine 231, aspartate 233, and histidine 288. The 2-oxoglutarate site is built by arginine 298 and serine 300.

Belongs to the iron/ascorbate-dependent oxidoreductase family. L-ascorbate serves as cofactor. It depends on Fe(2+) as a cofactor. In terms of tissue distribution, expressed in both primary and lateral roots under iron-deficient conditions, except in apical root zones, and mostly in the root epidermal layer.

The catalysed reaction is scopoletin + 2-oxoglutarate + O2 = fraxetin + succinate + CO2. It functions in the pathway phenylpropanoid metabolism. Involved in the pathway of sideretin biosynthesis from feruloyl CoA, a redox-active catecholic metabolite exuded by roots in response to iron deficiency in order to facilitate the uptake of iron; this pathway consists in the successive conversion from feruloyl CoA to scopoletin, from scopoletin to fraxetin and from fraxetin to sideretin. Catalyzes the biosynthesis of fraxetin via scopoletin hydroxylation. This chain is Scopoletin 8-hydroxylase, found in Arabidopsis thaliana (Mouse-ear cress).